Reading from the N-terminus, the 262-residue chain is Lysine 5,6-aminomutase beta subunit (262 aa).

The region spanning 120–262 (KIVVVGASTG…VKTLNDRMNS (143 aa)) is the B12-binding domain. Adenosylcob(III)alamin contacts are provided by residues 130–136 (TDAHTVG) and His133. Lys144 bears the N6-(pyridoxal phosphate)lysine mark. Adenosylcob(III)alamin-binding positions include 185–192 (LVSQTVTQ), 219–223 (LCGGP), and 239–244 (FGPGRF).

This sequence belongs to the KamE family. In terms of assembly, heterotetramer of 2 alpha and 2 beta subunits. Adenosylcob(III)alamin serves as cofactor. The cofactor is pyridoxal 5'-phosphate.

The enzyme catalyses (3S)-3,6-diaminohexanoate = (3S,5S)-3,5-diaminohexanoate. The catalysed reaction is D-lysine = (2R,5S)-2,5-diaminohexanoate. It functions in the pathway amino-acid metabolism; lysine degradation. With respect to regulation, rapidly inactivated in the presence of D-lysine and to a lesser extent in the absence of adenosylcobalamin (Adocbl). Activity is stable in the presence of Adocbl when D-lysine is absent. Adocbl imparts thermal stability at 37 degrees Celsius. Functionally, catalyzes the migration of the L-beta-lysine and D-lysine epsilon amino group to the delta carbon to produce 3,5-diaminohexanoate and 2,5-diaminohexanoate, respectively. The chain is Lysine 5,6-aminomutase beta subunit (kamE) from Acetoanaerobium sticklandii (strain ATCC 12662 / DSM 519 / JCM 1433 / CCUG 9281 / NCIMB 10654 / HF) (Clostridium sticklandii).